Here is a 209-residue protein sequence, read N- to C-terminus: UPF0502 protein mll4256 (209 aa).

The protein belongs to the UPF0502 family.

The chain is UPF0502 protein mll4256 from Mesorhizobium japonicum (strain LMG 29417 / CECT 9101 / MAFF 303099) (Mesorhizobium loti (strain MAFF 303099)).